The primary structure comprises 419 residues: Mitogen-activated protein kinase pmk-2 (419 aa).

The Protein kinase domain occupies 49–350 (YNSLKPLGEG…VSSALRHDYL (302 aa)). Residues 55 to 63 (LGEGAYGVV) and Lys78 contribute to the ATP site. The active-site Proton acceptor is the Asp210. At Thr222 the chain carries Phosphothreonine. A TXY motif is present at residues 222–224 (TGY). Phosphotyrosine is present on Tyr224.

The protein belongs to the protein kinase superfamily. CMGC Ser/Thr protein kinase family. MAP kinase subfamily. The cofactor is Mg(2+). Dually phosphorylated on Thr-222 and Tyr-224, which activates the enzyme.

Its subcellular location is the cytoplasm. The enzyme catalyses L-seryl-[protein] + ATP = O-phospho-L-seryl-[protein] + ADP + H(+). It catalyses the reaction L-threonyl-[protein] + ATP = O-phospho-L-threonyl-[protein] + ADP + H(+). Activated by phosphorylation on threonine and tyrosine. Inhibited by pyridinyl-imidazole related compounds. Responds to activation by environmental stress and pro-inflammatory cytokines by phosphorylating downstream targets. This is Mitogen-activated protein kinase pmk-2 (pmk-2) from Caenorhabditis elegans.